The primary structure comprises 389 residues: Cellobiose 2-epimerase (389 aa).

This sequence belongs to the cellobiose 2-epimerase family. Monomer.

The catalysed reaction is D-cellobiose = beta-D-glucosyl-(1-&gt;4)-D-mannopyranose. Its function is as follows. Catalyzes the reversible epimerization of cellobiose to 4-O-beta-D-glucopyranosyl-D-mannose (Glc-Man). Catalyzes epimerization but also isomerization for beta-1,4- and alpha-1,4-gluco-oligosaccharides. Can use cellobiose, lactose, cellotriose, maltose and maltotriose. The protein is Cellobiose 2-epimerase of Dictyoglomus turgidum (strain DSM 6724 / Z-1310).